A 243-amino-acid chain; its full sequence is Ribosomal RNA small subunit methyltransferase G (243 aa).

Residues glycine 82, phenylalanine 87, 133 to 134, and arginine 152 each bind S-adenosyl-L-methionine; that span reads AE.

The protein belongs to the methyltransferase superfamily. RNA methyltransferase RsmG family.

It localises to the cytoplasm. Specifically methylates the N7 position of a guanine in 16S rRNA. This is Ribosomal RNA small subunit methyltransferase G from Clostridium novyi (strain NT).